The chain runs to 370 residues: Peptide chain release factor 1 (370 aa).

An N5-methylglutamine modification is found at glutamine 239.

It belongs to the prokaryotic/mitochondrial release factor family. Methylated by PrmC. Methylation increases the termination efficiency of RF1.

It is found in the cytoplasm. In terms of biological role, peptide chain release factor 1 directs the termination of translation in response to the peptide chain termination codons UAG and UAA. The polypeptide is Peptide chain release factor 1 (Bacteroides thetaiotaomicron (strain ATCC 29148 / DSM 2079 / JCM 5827 / CCUG 10774 / NCTC 10582 / VPI-5482 / E50)).